The chain runs to 181 residues: MGIMCSGDVSERMNKTIELLKEQFLSIHSGRVNSGQFEKVMVDCEGASVPLVSLASIRVLNANTIVVTPYDSALLSQIDRALRNVPNIGTPGNDGECIKIVMPQLTEARRHEYVKQARVKAEEARVSARNIRRKARASLDAMGLAKDEIVRREKELDKLTKDVISVVDDLLRHKESELLRL.

Belongs to the RRF family.

It is found in the cytoplasm. In terms of biological role, responsible for the release of ribosomes from messenger RNA at the termination of protein biosynthesis. May increase the efficiency of translation by recycling ribosomes from one round of translation to another. The chain is Ribosome-recycling factor from Tropheryma whipplei (strain TW08/27) (Whipple's bacillus).